Consider the following 139-residue polypeptide: Large ribosomal subunit protein bL20 (139 aa).

Belongs to the bacterial ribosomal protein bL20 family.

In terms of biological role, binds directly to 23S ribosomal RNA and is necessary for the in vitro assembly process of the 50S ribosomal subunit. It is not involved in the protein synthesizing functions of that subunit. The polypeptide is Large ribosomal subunit protein bL20 (Leuconostoc citreum (strain KM20)).